A 174-amino-acid chain; its full sequence is Elongation factor Tu, mitochondrial (174 aa).

62 to 66 is a binding site for GTP; that stretch reads DCPGH. Lysine 78 carries the post-translational modification N6-succinyllysine. Phosphothreonine is present on threonine 103. At serine 121 the chain carries Phosphoserine. Lysine 161 carries the post-translational modification N6-acetyllysine.

It belongs to the GTP-binding elongation factor family. EF-Tu/EF-1A subfamily.

It is found in the mitochondrion. It catalyses the reaction GTP + H2O = GDP + phosphate + H(+). GTP hydrolase that promotes the GTP-dependent binding of aminoacyl-tRNA to the A-site of ribosomes during protein biosynthesis. The sequence is that of Elongation factor Tu, mitochondrial from Mesocricetus auratus (Golden hamster).